A 699-amino-acid polypeptide reads, in one-letter code: Long-chain-fatty-acid--CoA ligase 1 (699 aa).

N-acetylmethionine is present on Met1. Tyr9 carries the post-translational modification 3'-nitrotyrosine. Residues Leu25 to Ala45 traverse the membrane as a helical; Signal-anchor for type III membrane protein segment. Topologically, residues Thr46–Ile699 are cytoplasmic. Tyr85 is modified (phosphotyrosine). 3'-nitrotyrosine is present on Tyr86. Ser136 is a glycosylation site (O-linked (GlcNAc) serine). N6-acetyllysine occurs at positions 208, 357, and 387. Phosphoserine is present on Ser621. Residue Lys633 is modified to N6-acetyllysine.

This sequence belongs to the ATP-dependent AMP-binding enzyme family. It depends on Mg(2+) as a cofactor. Liver, heart, epididymal adipose and to a lesser extent brain, small intestine and lung.

The protein resides in the mitochondrion outer membrane. It is found in the peroxisome membrane. Its subcellular location is the microsome membrane. The protein localises to the endoplasmic reticulum membrane. The enzyme catalyses a long-chain fatty acid + ATP + CoA = a long-chain fatty acyl-CoA + AMP + diphosphate. It catalyses the reaction (5Z,8Z,11Z,14Z)-eicosatetraenoate + ATP + CoA = (5Z,8Z,11Z,14Z)-eicosatetraenoyl-CoA + AMP + diphosphate. The catalysed reaction is 3,7,11,15-tetramethylhexadecanoate + ATP + CoA = phytanoyl-CoA + AMP + diphosphate. It carries out the reaction hexadecanoate + ATP + CoA = hexadecanoyl-CoA + AMP + diphosphate. The enzyme catalyses (E)-hexadec-2-enoate + ATP + CoA = (2E)-hexadecenoyl-CoA + AMP + diphosphate. It catalyses the reaction 2,6,10,14-tetramethylpentadecanoate + ATP + CoA = pristanoyl-CoA + AMP + diphosphate. The catalysed reaction is 14,15-epoxy-(5Z,8Z,11Z)-eicosatrienoate + ATP + CoA = 14,15-epoxy-(5Z,8Z,11Z)-eicosatrienoyl-CoA + AMP + diphosphate. It carries out the reaction 5-hydroxy-(6E,8Z,11Z,14Z)-eicosatetraenoate + ATP + CoA = 5-hydroxy-(6E,8Z,11Z,14Z)-eicosatetraenoyl-CoA + AMP + diphosphate. The enzyme catalyses 12-hydroxy-(5Z,8Z,10E,14Z)-eicosatetraenoate + ATP + CoA = 12-hydroxy-(5Z,8Z,10E,14Z)-eicosatetraenoyl-CoA + AMP + diphosphate. It catalyses the reaction 15-hydroxy-(5Z,8Z,11Z,13E)-eicosatetraenoate + ATP + CoA = 15-hydroxy-(5Z,8Z,11Z,13E)-eicosatetraenoyl-CoA + AMP + diphosphate. The catalysed reaction is (9Z)-octadecenoate + ATP + CoA = (9Z)-octadecenoyl-CoA + AMP + diphosphate. Its activity is regulated as follows. Inhibited at high temperature and by arachidonate. Its function is as follows. Catalyzes the conversion of long-chain fatty acids to their active form acyl-CoAs for both synthesis of cellular lipids, and degradation via beta-oxidation. Preferentially uses palmitoleate, oleate and linoleate. Preferentially activates arachidonate than epoxyeicosatrienoic acids (EETs) or hydroxyeicosatrienoic acids (HETEs). The polypeptide is Long-chain-fatty-acid--CoA ligase 1 (Rattus norvegicus (Rat)).